The chain runs to 790 residues: Penicillin-binding protein 1A (790 aa).

Residues 1–6 (MYKSLL) are Cytoplasmic-facing. Residues 7–27 (FCLKIFVFLILVGCGITAYII) traverse the membrane as a helical; Signal-anchor for type II membrane protein segment. Over 28-790 (YHYSRDLPDY…SKEDQSQEIY (763 aa)) the chain is Periplasmic. The interval 49-220 (TRIYSRDGKL…SELNPERNYA (172 aa)) is transglycosylase. Glu87 serves as the catalytic Proton donor; for transglycosylase activity. A transpeptidase region spans residues 398–711 (DVIVVEAIKE…SNVVLPIFID (314 aa)). Catalysis depends on Ser457, which acts as the Acyl-ester intermediate; for transpeptidase activity.

It in the N-terminal section; belongs to the glycosyltransferase 51 family. In the C-terminal section; belongs to the transpeptidase family.

The protein localises to the cell inner membrane. The catalysed reaction is [GlcNAc-(1-&gt;4)-Mur2Ac(oyl-L-Ala-gamma-D-Glu-L-Lys-D-Ala-D-Ala)](n)-di-trans,octa-cis-undecaprenyl diphosphate + beta-D-GlcNAc-(1-&gt;4)-Mur2Ac(oyl-L-Ala-gamma-D-Glu-L-Lys-D-Ala-D-Ala)-di-trans,octa-cis-undecaprenyl diphosphate = [GlcNAc-(1-&gt;4)-Mur2Ac(oyl-L-Ala-gamma-D-Glu-L-Lys-D-Ala-D-Ala)](n+1)-di-trans,octa-cis-undecaprenyl diphosphate + di-trans,octa-cis-undecaprenyl diphosphate + H(+). The enzyme catalyses Preferential cleavage: (Ac)2-L-Lys-D-Ala-|-D-Ala. Also transpeptidation of peptidyl-alanyl moieties that are N-acyl substituents of D-alanine.. It participates in cell wall biogenesis; peptidoglycan biosynthesis. Its function is as follows. Cell wall formation. Synthesis of cross-linked peptidoglycan from the lipid intermediates. The enzyme has a penicillin-insensitive transglycosylase N-terminal domain (formation of linear glycan strands) and a penicillin-sensitive transpeptidase C-terminal domain (cross-linking of the peptide subunits). The polypeptide is Penicillin-binding protein 1A (mrcA) (Rickettsia conorii (strain ATCC VR-613 / Malish 7)).